The chain runs to 421 residues: Medium-chain specific acyl-CoA dehydrogenase, mitochondrial (421 aa).

Residues M1–T25 constitute a mitochondrion transit peptide. The residue at position 79 (K79) is an N6-acetyllysine. FAD is bound at residue Y158–S167. S167 is an octanoyl-CoA binding site. N6-succinyllysine is present on K179. W191 to T193 lines the FAD pocket. N6-acetyllysine; alternate is present on K212. Position 212 is an N6-succinyllysine; alternate (K212). Octanoyl-CoA is bound at residue S216. Residues K217, K259, and K271 each carry the N6-acetyllysine; alternate modification. N6-succinyllysine; alternate is present on residues K217, K259, and K271. D278 provides a ligand contact to octanoyl-CoA. K279 bears the N6-acetyllysine mark. R281 provides a ligand contact to octanoyl-CoA. K301 is subject to N6-acetyllysine. Residues R306 to T308 and H316 to Q317 contribute to the FAD site. The octanoyl-CoA site is built by R349 and T351. At T351 the chain carries Phosphothreonine. Residue Q374–G378 coordinates FAD. E401 is an octanoyl-CoA binding site. The Proton acceptor role is filled by E401. Position 402–405 (G402–Q405) interacts with FAD.

The protein belongs to the acyl-CoA dehydrogenase family. As to quaternary structure, homotetramer. Interacts with the heterodimeric electron transfer flavoprotein ETF. The cofactor is FAD. Post-translationally, acetylated. Could occur at proximity of the cofactor-binding sites and reduce the catalytic activity. Could be deacetylated by SIRT3.

The protein localises to the mitochondrion matrix. It carries out the reaction a medium-chain 2,3-saturated fatty acyl-CoA + oxidized [electron-transfer flavoprotein] + H(+) = a medium-chain (2E)-enoyl-CoA + reduced [electron-transfer flavoprotein]. The catalysed reaction is pentanoyl-CoA + oxidized [electron-transfer flavoprotein] + H(+) = (2E)-pentenoyl-CoA + reduced [electron-transfer flavoprotein]. It catalyses the reaction hexanoyl-CoA + oxidized [electron-transfer flavoprotein] + H(+) = (2E)-hexenoyl-CoA + reduced [electron-transfer flavoprotein]. The enzyme catalyses octanoyl-CoA + oxidized [electron-transfer flavoprotein] + H(+) = (2E)-octenoyl-CoA + reduced [electron-transfer flavoprotein]. It carries out the reaction decanoyl-CoA + oxidized [electron-transfer flavoprotein] + H(+) = (2E)-decenoyl-CoA + reduced [electron-transfer flavoprotein]. The catalysed reaction is dodecanoyl-CoA + oxidized [electron-transfer flavoprotein] + H(+) = (2E)-dodecenoyl-CoA + reduced [electron-transfer flavoprotein]. It catalyses the reaction tetradecanoyl-CoA + oxidized [electron-transfer flavoprotein] + H(+) = (2E)-tetradecenoyl-CoA + reduced [electron-transfer flavoprotein]. The enzyme catalyses oxidized [electron-transfer flavoprotein] + hexadecanoyl-CoA + H(+) = (2E)-hexadecenoyl-CoA + reduced [electron-transfer flavoprotein]. It participates in lipid metabolism; mitochondrial fatty acid beta-oxidation. Its function is as follows. Medium-chain specific acyl-CoA dehydrogenase is one of the acyl-CoA dehydrogenases that catalyze the first step of mitochondrial fatty acid beta-oxidation, an aerobic process breaking down fatty acids into acetyl-CoA and allowing the production of energy from fats. The first step of fatty acid beta-oxidation consists in the removal of one hydrogen from C-2 and C-3 of the straight-chain fatty acyl-CoA thioester, resulting in the formation of trans-2-enoyl-CoA. Electron transfer flavoprotein (ETF) is the electron acceptor that transfers electrons to the main mitochondrial respiratory chain via ETF-ubiquinone oxidoreductase (ETF dehydrogenase). Among the different mitochondrial acyl-CoA dehydrogenases, medium-chain specific acyl-CoA dehydrogenase acts specifically on acyl-CoAs with saturated 6 to 12 carbons long primary chains. The chain is Medium-chain specific acyl-CoA dehydrogenase, mitochondrial from Sus scrofa (Pig).